We begin with the raw amino-acid sequence, 564 residues long: Large neutral amino acids transporter small subunit 3 (564 aa).

Residues 20 to 40 (VVENLFFSAVLLGWASLLIML) traverse the membrane as a helical segment. 2 N-linked (GlcNAc...) asparagine glycosylation sites follow: asparagine 54 and asparagine 57. The next 5 helical transmembrane spans lie at 78 to 98 (LGFT…GILM), 105 to 124 (PLRL…MALA), 131 to 151 (LSPL…CLTF), 165 to 185 (STFM…FPGI), and 191 to 211 (AGVP…LIFL). Serine 262 and serine 267 each carry phosphoserine. Helical transmembrane passes span 303 to 323 (IFLW…FYMG) and 357 to 377 (SIFG…GYIM). An N-linked (GlcNAc...) asparagine glycan is attached at asparagine 396. Serine 398 bears the Phosphoserine mark. Helical transmembrane passes span 424-444 (AINA…ACLI), 451-471 (LLAF…CGGL), 490-510 (LISA…VGPL), and 515-535 (FWVN…PSYL). N-linked (GlcNAc...) asparagine glycosylation occurs at asparagine 558.

Belongs to the SLC43A transporter (TC 2.A.1.44) family. As to expression, expressed in the kidney cortex as well as liver, pancreas, and skeletal muscle. In kidney expressed in the glomerular tuft (at protein level). Expressed in liver, skeletal muscle and pancreas (at protein level).

It localises to the cell membrane. The protein resides in the apical cell membrane. It is found in the endoplasmic reticulum membrane. The enzyme catalyses D-leucine(in) = D-leucine(out). It carries out the reaction L-leucine(in) = L-leucine(out). The catalysed reaction is L-isoleucine(in) = L-isoleucine(out). It catalyses the reaction L-methionine(in) = L-methionine(out). The enzyme catalyses L-phenylalanine(in) = L-phenylalanine(out). It carries out the reaction L-valine(in) = L-valine(out). Its function is as follows. Uniport that mediates the transport of neutral amino acids such as L-leucine, L-isoleucine, L-valine, and L-phenylalanine. The transport activity is sodium ions-independent, electroneutral and mediated by a facilitated diffusion. The protein is Large neutral amino acids transporter small subunit 3 of Mus musculus (Mouse).